The sequence spans 140 residues: Translation initiation factor 2 subunit beta (140 aa).

Belongs to the eIF-2-beta/eIF-5 family. As to quaternary structure, heterotrimer composed of an alpha, a beta and a gamma chain.

EIF-2 functions in the early steps of protein synthesis by forming a ternary complex with GTP and initiator tRNA. In Metallosphaera sedula (strain ATCC 51363 / DSM 5348 / JCM 9185 / NBRC 15509 / TH2), this protein is Translation initiation factor 2 subunit beta.